The chain runs to 267 residues: NAD kinase (267 aa).

Asp-45 acts as the Proton acceptor in catalysis. Residues 45–46 (DG), 121–122 (NE), Arg-147, Asp-149, 160–165 (TAYSKS), and Ala-184 contribute to the NAD(+) site.

The protein belongs to the NAD kinase family. A divalent metal cation serves as cofactor.

The protein localises to the cytoplasm. It carries out the reaction NAD(+) + ATP = ADP + NADP(+) + H(+). Involved in the regulation of the intracellular balance of NAD and NADP, and is a key enzyme in the biosynthesis of NADP. Catalyzes specifically the phosphorylation on 2'-hydroxyl of the adenosine moiety of NAD to yield NADP. This Lactobacillus acidophilus (strain ATCC 700396 / NCK56 / N2 / NCFM) protein is NAD kinase.